Here is a 524-residue protein sequence, read N- to C-terminus: Glycoprotein (524 aa).

The N-terminal stretch at 1-19 (MVPQALLLVPILGFSSCFG) is a signal peptide. Over 20-459 (KFPIYTIPDT…DLGLPNWGEY (440 aa)) the chain is Virion surface. 6 disulfide bridges follow: Cys43–Cys302, Cys54–Cys226, Cys80–Cys113, Cys178–Cys188, Cys208–Cys247, and Cys242–Cys271. Asn56 is a glycosylation site (N-linked (GlcNAc...) asparagine; by host). 2 N-linked (GlcNAc...) asparagine; by host glycosylation sites follow: Asn266 and Asn338. The cysteines at positions 363 and 370 are disulfide-linked. A helical transmembrane segment spans residues 460 to 480 (VLLSAGTLIALMLIIFLMTCC). Cys480 carries S-palmitoyl cysteine; by host lipidation. Topologically, residues 481–524 (RKVDRPESTQRSLRGTGRNVSVTSQSGKFIPSWESYKSGGETGL) are intravirion.

This sequence belongs to the lyssavirus glycoprotein family. As to quaternary structure, homotrimer. Interacts with matrix protein. Interacts with host TRFC. Interacts with host BST2; this interaction inhibits viral budding by tethering new virions to the cell surface. Interacts with ITGB1. Interacts with host GRM2. Post-translationally, glycosylated and palmitoylated by host. Glycosylation is crucial for glycoprotein export at the cell surface.

The protein localises to the virion membrane. Attaches the virus to host cellular receptor, inducing endocytosis of the virion by using different host proteins including TFRC, GRM2 and ITGB1. In the endosome, the acidic pH induces conformational changes in the glycoprotein trimer, which trigger fusion between virus and cell membrane. There is convincing in vitro evidence that the muscular form of the nicotinic acetylcholine receptor (nAChR), the neuronal cell adhesion molecule (NCAM), and the p75 neurotrophin receptor (p75NTR) bind glycoprotein and thereby facilitate rabies virus entry into cells. The protein is Glycoprotein (G) of Rabies virus (strain Nishigahara RCEH) (RABV).